Consider the following 235-residue polypeptide: Pyridoxine 5'-phosphate synthase (235 aa).

Asparagine 6 provides a ligand contact to 3-amino-2-oxopropyl phosphate. 8–9 (DH) contacts 1-deoxy-D-xylulose 5-phosphate. Arginine 17 is a 3-amino-2-oxopropyl phosphate binding site. Catalysis depends on histidine 42, which acts as the Proton acceptor. Residues arginine 44 and histidine 49 each contribute to the 1-deoxy-D-xylulose 5-phosphate site. Residue glutamate 69 is the Proton acceptor of the active site. Threonine 99 contacts 1-deoxy-D-xylulose 5-phosphate. Histidine 189 serves as the catalytic Proton donor. Residues glycine 190 and 211-212 (GH) contribute to the 3-amino-2-oxopropyl phosphate site.

It belongs to the PNP synthase family. In terms of assembly, homooctamer; tetramer of dimers.

The protein resides in the cytoplasm. The catalysed reaction is 3-amino-2-oxopropyl phosphate + 1-deoxy-D-xylulose 5-phosphate = pyridoxine 5'-phosphate + phosphate + 2 H2O + H(+). The protein operates within cofactor biosynthesis; pyridoxine 5'-phosphate biosynthesis; pyridoxine 5'-phosphate from D-erythrose 4-phosphate: step 5/5. Functionally, catalyzes the complicated ring closure reaction between the two acyclic compounds 1-deoxy-D-xylulose-5-phosphate (DXP) and 3-amino-2-oxopropyl phosphate (1-amino-acetone-3-phosphate or AAP) to form pyridoxine 5'-phosphate (PNP) and inorganic phosphate. The chain is Pyridoxine 5'-phosphate synthase from Chlorobium luteolum (strain DSM 273 / BCRC 81028 / 2530) (Pelodictyon luteolum).